Consider the following 511-residue polypeptide: Maturase K (511 aa).

This sequence belongs to the intron maturase 2 family. MatK subfamily.

Its subcellular location is the plastid. The protein localises to the chloroplast. Functionally, usually encoded in the trnK tRNA gene intron. Probably assists in splicing its own and other chloroplast group II introns. In Anchomanes difformis (Amorphophallus difformis), this protein is Maturase K.